The primary structure comprises 88 residues: UPF0367 protein AM1_1885 (88 aa).

It belongs to the UPF0367 family.

This is UPF0367 protein AM1_1885 from Acaryochloris marina (strain MBIC 11017).